Consider the following 327-residue polypeptide: Glycerol-3-phosphate dehydrogenase [NAD(P)+] (327 aa).

Residues Ser10, Phe11, Arg31, and Lys108 each contribute to the NADPH site. Sn-glycerol 3-phosphate contacts are provided by Lys108, Gly136, and Ser138. Ala140 serves as a coordination point for NADPH. Sn-glycerol 3-phosphate is bound by residues Lys191, Asp246, Ser256, Arg257, and Asn258. Lys191 (proton acceptor) is an active-site residue. Arg257 lines the NADPH pocket. NADPH contacts are provided by Leu281 and Glu283.

The protein belongs to the NAD-dependent glycerol-3-phosphate dehydrogenase family.

The protein localises to the cytoplasm. The catalysed reaction is sn-glycerol 3-phosphate + NAD(+) = dihydroxyacetone phosphate + NADH + H(+). The enzyme catalyses sn-glycerol 3-phosphate + NADP(+) = dihydroxyacetone phosphate + NADPH + H(+). It participates in membrane lipid metabolism; glycerophospholipid metabolism. Its function is as follows. Catalyzes the reduction of the glycolytic intermediate dihydroxyacetone phosphate (DHAP) to sn-glycerol 3-phosphate (G3P), the key precursor for phospholipid synthesis. This is Glycerol-3-phosphate dehydrogenase [NAD(P)+] from Ehrlichia ruminantium (strain Welgevonden).